The chain runs to 329 residues: Adenylate isopentenyltransferase 7, mitochondrial (329 aa).

The N-terminal 40 residues, 1–40 (MKFSISSLKQVQPILCFKNKLSKVNVNSFLHPKEKVIFVM), are a transit peptide targeting the mitochondrion. 41–48 (GATGSGKS) provides a ligand contact to ATP.

The protein belongs to the IPP transferase family. As to expression, expressed in both the vascular stele and the phloem companion cells of the root, in endodermis of the root elongation zone, trichomes on young leaves, and some pollen tubes.

The protein resides in the mitochondrion. The enzyme catalyses dimethylallyl diphosphate + ADP = N(6)-(dimethylallyl)adenosine 5'-diphosphate + diphosphate. The catalysed reaction is dimethylallyl diphosphate + ATP = N(6)-(dimethylallyl)adenosine 5'-triphosphate + diphosphate. Functionally, involved in cytokinin biosynthesis. Catalyzes the transfer of an isopentenyl group from dimethylallyl diphosphate (DMAPP) to ATP and ADP. In Arabidopsis thaliana (Mouse-ear cress), this protein is Adenylate isopentenyltransferase 7, mitochondrial (IPT7).